The following is a 341-amino-acid chain: Basic membrane protein B (341 aa).

A signal peptide spans methionine 1–serine 14. A lipid anchor (N-palmitoyl cysteine) is attached at cysteine 15. Cysteine 15 carries the S-diacylglycerol cysteine lipid modification.

The protein belongs to the BMP lipoprotein family. Monomer.

It is found in the cell inner membrane. Functionally, may be part of an ABC-type nucleoside uptake system involved in the purine salvage pathway. This is Basic membrane protein B (bmpB) from Borreliella afzelii (strain PKo) (Borrelia afzelii).